Here is a 338-residue protein sequence, read N- to C-terminus: Auxin-responsive protein IAA9 (338 aa).

Positions 1–25 are disordered; sequence MSPEEELQSNVSVASSSPTSNCISR. The segment covering 9–21 has biased composition (low complexity); the sequence is SNVSVASSSPTSN. An EAR-like (transcriptional repression) motif is present at residues 68 to 72; that stretch reads LTLGL. The tract at residues 150 to 186 is disordered; it reads ATQSVTKKDVPQNIPKGQSSTTNNSSSPPAAKAQIVG. A compositionally biased stretch (low complexity) spans 168–180; it reads SSTTNNSSSPPAA. Residues 216-318 form the PB1 domain; the sequence is ALFVKVSMDG…VCKKLKIMKG (103 aa).

Belongs to the Aux/IAA family. Homodimers and heterodimers. Interacts with TPL. Phosphorylated by phytochrome A in vitro. In terms of tissue distribution, highly expressed in the whole plant.

The protein resides in the nucleus. Its function is as follows. Aux/IAA proteins are short-lived transcriptional factors that function as repressors of early auxin response genes at low auxin concentrations. Repression is thought to result from the interaction with auxin response factors (ARFs), proteins that bind to the auxin-responsive promoter element (AuxRE). Formation of heterodimers with ARF proteins may alter their ability to modulate early auxin response genes expression. The polypeptide is Auxin-responsive protein IAA9 (IAA9) (Arabidopsis thaliana (Mouse-ear cress)).